Consider the following 507-residue polypeptide: Cytochrome P450 monooxygenase cloA (507 aa).

The helical transmembrane segment at 15–35 threads the bilayer; sequence WTWILLTTCIALTSPLVLKGI. The N-linked (GlcNAc...) asparagine glycan is linked to N247. Heme is bound at residue C450.

It belongs to the cytochrome P450 family. It depends on heme as a cofactor.

The protein resides in the membrane. Its pathway is alkaloid biosynthesis; ergot alkaloid biosynthesis. In terms of biological role, cytochrome P450 monooxygenase; part of the gene cluster that mediates the biosynthesis of fungal ergot alkaloid. DmaW catalyzes the first step of ergot alkaloid biosynthesis by condensing dimethylallyl diphosphate (DMAP) and tryptophan to form 4-dimethylallyl-L-tryptophan. The second step is catalyzed by the methyltransferase easF that methylates 4-dimethylallyl-L-tryptophan in the presence of S-adenosyl-L-methionine, resulting in the formation of 4-dimethylallyl-L-abrine. The catalase easC and the FAD-dependent oxidoreductase easE then transform 4-dimethylallyl-L-abrine to chanoclavine-I which is further oxidized by easD in the presence of NAD(+), resulting in the formation of chanoclavine-I aldehyde. Agroclavine dehydrogenase easG then mediates the conversion of chanoclavine-I aldehyde to agroclavine via a non-enzymatic adduct reaction: the substrate is an iminium intermediate that is formed spontaneously from chanoclavine-I aldehyde in the presence of glutathione. The presence of easA is not required to complete this reaction. Further conversion of agroclavine to paspalic acid is a two-step process involving oxidation of agroclavine to elymoclavine and of elymoclavine to paspalic acid, the second step being performed by the elymoclavine oxidase cloA. Paspalic acid is then further converted to D-lysergic acid. Ergopeptines are assembled from D-lysergic acid and three different amino acids by the D-lysergyl-peptide-synthetases composed each of a monomudular and a trimodular nonribosomal peptide synthetase subunit. LpsB and lpsC encode the monomodular subunits responsible for D-lysergic acid activation and incorporation into the ergopeptine backbone. LpsA1 and A2 subunits encode the trimodular nonribosomal peptide synthetase assembling the tripeptide portion of ergopeptines. LpsA1 is responsible for formation of the major ergopeptine, ergotamine, and lpsA2 for alpha-ergocryptine, the minor ergopeptine of the total alkaloid mixture elaborated by C.purpurea. D-lysergyl-tripeptides are assembled by the nonribosomal peptide synthetases and released as N-(D-lysergyl-aminoacyl)-lactams. Cyclolization of the D-lysergyl-tripeptides is performed by the Fe(2+)/2-ketoglutarate-dependent dioxygenase easH which introduces a hydroxyl group into N-(D-lysergyl-aminoacyl)-lactam at alpha-C of the aminoacyl residue followed by spontaneous condensation with the terminal lactam carbonyl group. This Claviceps purpurea (Ergot fungus) protein is Cytochrome P450 monooxygenase cloA.